Consider the following 244-residue polypeptide: Claudin-12 (244 aa).

Residues 1–10 (MGCRDVHAAT) are Cytoplasmic-facing. Residues 11–31 (VLSFLCGIASVAGLFAGTLLP) form a helical membrane-spanning segment. Topologically, residues 32–87 (NWRKLRLITFNRNEKNLTVYTGLWVKCARYDGGNDCLMYDAAWYSSVDQLDLRVLQ) are extracellular. The helical transmembrane segment at 88 to 108 (FALPLSILIAMGALLLCLIGM) threads the bilayer. Over 109–135 (CNTAFRSSVPNIKLAKCLVNSAGCHLV) the chain is Cytoplasmic. Residues 136-156 (AGLLFFLAGTVSLSPSIWVIF) form a helical membrane-spanning segment. Topologically, residues 157–174 (YNIHLNRKFEPVFAFDYA) are extracellular. The helical transmembrane segment at 175–195 (VYVTVASAGGLFMTALLLFIW) threads the bilayer. The Cytoplasmic segment spans residues 196–244 (YCACKSLPSPFWQPLYSHPPGMHTYSQPYSARSRLSAIEIDIPVVSHTT). Phosphoserine is present on residues serine 228 and serine 231.

The protein belongs to the claudin family. Interacts with OCLN.

It localises to the cell junction. Its subcellular location is the tight junction. The protein resides in the cell membrane. Plays a major role in tight junction-specific obliteration of the intercellular space, through calcium-independent cell-adhesion activity. The sequence is that of Claudin-12 (CLDN12) from Bos taurus (Bovine).